The primary structure comprises 191 residues: Glycerol-3-phosphate acyltransferase (191 aa).

5 helical membrane passes run 3 to 23 (YLIV…FILT), 51 to 71 (TLGY…VLYV), 78 to 98 (YIFI…WLKF), 108 to 128 (VGIL…SWAV), and 150 to 170 (YLIV…VLIF).

The protein belongs to the PlsY family. As to quaternary structure, probably interacts with PlsX.

The protein localises to the cell inner membrane. It catalyses the reaction an acyl phosphate + sn-glycerol 3-phosphate = a 1-acyl-sn-glycero-3-phosphate + phosphate. It participates in lipid metabolism; phospholipid metabolism. Functionally, catalyzes the transfer of an acyl group from acyl-phosphate (acyl-PO(4)) to glycerol-3-phosphate (G3P) to form lysophosphatidic acid (LPA). This enzyme utilizes acyl-phosphate as fatty acyl donor, but not acyl-CoA or acyl-ACP. This chain is Glycerol-3-phosphate acyltransferase, found in Pelagibacter ubique (strain HTCC1062).